The primary structure comprises 433 residues: MKKYDRGWASLETGAALLIVMLLIAWGAGIWQDYIQTKGWQTEARLVSNWTSAARSYIGKNYTTLQGSSTTTTPAVITTTMLKNTGFLSSGFTETNSEGQRLQAYVVRNAQNPELLQAMVVSSGGTPYPVKALIQMAKDITTGLGGYIQDGKTATGALRSWSVALSNYGAKSGNGHIAVLLSTDELSGAAEDTDRLYRFQVNGRPDLNKMHTAIDMGSNNLNNVGAVNAQTGNFSGNVNGVNGTFSGQVKGNSGNFDVNVTAGGDIRSNNGWLITRNSKGWLNETHGGGFYMSDGSWVRSVNNKGIYTGGQVKGGTVRADGRLYTGEYLQLERTAVAGASCSPNGLVGRDNTGAILSCQSGRWSGGNKINYSACNWYKSSVAMNHFIGGKSGGSIYYKPIQCPTGYIMTGTRMYGIGDGVDEEHVDAYCCPFN.

The interval 1–361 (MKKYDRGWAS…TGAILSCQSG (361 aa)) is constant region. The variable region stretch occupies residues 362–433 (RWSGGNKINY…HVDAYCCPFN (72 aa)).

The polypeptide is Shufflon protein C' (Escherichia coli).